The sequence spans 331 residues: Pseudouridylate synthase TRUB2, mitochondrial (331 aa).

The transit peptide at 1–10 directs the protein to the mitochondrion; it reads MGSAGLSRLH. The active-site Nucleophile is aspartate 98. The tract at residues 296-331 is disordered; it reads KSLSPGLDTKQLPSPGWSWDSQGPSSTLGLERGAGQ. Residues 314 to 323 show a composition bias toward polar residues; it reads WDSQGPSSTL.

The protein belongs to the pseudouridine synthase TruB family. In terms of assembly, forms a regulatory protein-RNA complex, consisting of RCC1L, NGRN, RPUSD3, RPUSD4, TRUB2, FASTKD2 and 16S mt-rRNA.

It localises to the mitochondrion matrix. It carries out the reaction a uridine in mRNA = a pseudouridine in mRNA. The catalysed reaction is uridine(55) in tRNA = pseudouridine(55) in tRNA. In terms of biological role, minor enzyme contributing to the isomerization of uridine to pseudouridine (pseudouridylation) of specific mitochondrial mRNAs (mt-mRNAs) such as COXI and COXIII mt-mRNAs. As a component of a functional protein-RNA module, consisting of RCC1L, NGRN, RPUSD3, RPUSD4, TRUB2, FASTKD2 and 16S mitochondrial ribosomal RNA (16S mt-rRNA), controls 16S mt-rRNA abundance and is required for intra-mitochondrial translation. Also catalyzes pseudouridylation of some tRNAs, including synthesis of pseudouridine(55) from uracil-55, in the psi GC loop of a subset of tRNAs. This Homo sapiens (Human) protein is Pseudouridylate synthase TRUB2, mitochondrial.